Reading from the N-terminus, the 458-residue chain is RuvB-like helicase 1 (458 aa).

The span at 1 to 18 (MVQITEVKENQSSRESRT) shows a compositional bias: basic and acidic residues. A disordered region spans residues 1–20 (MVQITEVKENQSSRESRTAA). 73–80 (GPPATGKT) provides a ligand contact to ATP.

The protein belongs to the RuvB family. As to quaternary structure, may form heterododecamers with RVB2. Component of the SWR1 chromatin remodeling complex, the INO80 chromatin remodeling complex, and of the R2TP complex.

The protein resides in the nucleus. The catalysed reaction is ATP + H2O = ADP + phosphate + H(+). Functionally, DNA helicase which participates in several chromatin remodeling complexes, including the SWR1 and the INO80 complexes. The SWR1 complex mediates the ATP-dependent exchange of histone H2A for the H2A variant HZT1 leading to transcriptional regulation of selected genes by chromatin remodeling. The INO80 complex remodels chromatin by shifting nucleosomes and is involved in DNA repair. Also involved in pre-rRNA processing. The protein is RuvB-like helicase 1 (RVB1) of Candida albicans (strain SC5314 / ATCC MYA-2876) (Yeast).